A 421-amino-acid polypeptide reads, in one-letter code: Medium-chain specific acyl-CoA dehydrogenase, mitochondrial (421 aa).

The transit peptide at 1 to 25 (MAAALRRGYKVLRSVSHFECRAQHT) directs the protein to the mitochondrion. Lysine 69 carries the post-translational modification N6-acetyllysine; alternate. N6-succinyllysine; alternate is present on lysine 69. The residue at position 79 (lysine 79) is an N6-acetyllysine. Residue 158-167 (YCVTEPSAGS) coordinates FAD. Serine 167 serves as a coordination point for octanoyl-CoA. Lysine 179 carries the post-translational modification N6-succinyllysine. 191-193 (WIT) lines the FAD pocket. The residue at position 212 (lysine 212) is an N6-acetyllysine; alternate. The residue at position 212 (lysine 212) is an N6-succinyllysine; alternate. An octanoyl-CoA-binding site is contributed by serine 216. N6-acetyllysine; alternate occurs at positions 217, 259, and 271. N6-succinyllysine; alternate occurs at positions 217, 259, and 271. The octanoyl-CoA site is built by aspartate 278 and arginine 281. At lysine 301 the chain carries N6-acetyllysine. FAD is bound by residues 306–308 (RKT) and 316–317 (HQ). Octanoyl-CoA is bound by residues arginine 349 and threonine 351. The residue at position 351 (threonine 351) is a Phosphothreonine. 374–378 (QIFGG) provides a ligand contact to FAD. Glutamate 401 lines the octanoyl-CoA pocket. Glutamate 401 functions as the Proton acceptor in the catalytic mechanism. 402–405 (GTAQ) is an FAD binding site.

The protein belongs to the acyl-CoA dehydrogenase family. As to quaternary structure, homotetramer. Interacts with the heterodimeric electron transfer flavoprotein ETF. FAD is required as a cofactor. Post-translationally, acetylated. Could occur at proximity of the cofactor-binding sites and reduce the catalytic activity. Could be deacetylated by SIRT3.

Its subcellular location is the mitochondrion matrix. It carries out the reaction a medium-chain 2,3-saturated fatty acyl-CoA + oxidized [electron-transfer flavoprotein] + H(+) = a medium-chain (2E)-enoyl-CoA + reduced [electron-transfer flavoprotein]. It catalyses the reaction pentanoyl-CoA + oxidized [electron-transfer flavoprotein] + H(+) = (2E)-pentenoyl-CoA + reduced [electron-transfer flavoprotein]. The catalysed reaction is hexanoyl-CoA + oxidized [electron-transfer flavoprotein] + H(+) = (2E)-hexenoyl-CoA + reduced [electron-transfer flavoprotein]. The enzyme catalyses octanoyl-CoA + oxidized [electron-transfer flavoprotein] + H(+) = (2E)-octenoyl-CoA + reduced [electron-transfer flavoprotein]. It carries out the reaction decanoyl-CoA + oxidized [electron-transfer flavoprotein] + H(+) = (2E)-decenoyl-CoA + reduced [electron-transfer flavoprotein]. It catalyses the reaction dodecanoyl-CoA + oxidized [electron-transfer flavoprotein] + H(+) = (2E)-dodecenoyl-CoA + reduced [electron-transfer flavoprotein]. The catalysed reaction is tetradecanoyl-CoA + oxidized [electron-transfer flavoprotein] + H(+) = (2E)-tetradecenoyl-CoA + reduced [electron-transfer flavoprotein]. The enzyme catalyses oxidized [electron-transfer flavoprotein] + hexadecanoyl-CoA + H(+) = (2E)-hexadecenoyl-CoA + reduced [electron-transfer flavoprotein]. Its pathway is lipid metabolism; mitochondrial fatty acid beta-oxidation. Functionally, medium-chain specific acyl-CoA dehydrogenase is one of the acyl-CoA dehydrogenases that catalyze the first step of mitochondrial fatty acid beta-oxidation, an aerobic process breaking down fatty acids into acetyl-CoA and allowing the production of energy from fats. The first step of fatty acid beta-oxidation consists in the removal of one hydrogen from C-2 and C-3 of the straight-chain fatty acyl-CoA thioester, resulting in the formation of trans-2-enoyl-CoA. Electron transfer flavoprotein (ETF) is the electron acceptor that transfers electrons to the main mitochondrial respiratory chain via ETF-ubiquinone oxidoreductase (ETF dehydrogenase). Among the different mitochondrial acyl-CoA dehydrogenases, medium-chain specific acyl-CoA dehydrogenase acts specifically on acyl-CoAs with saturated 6 to 12 carbons long primary chains. The protein is Medium-chain specific acyl-CoA dehydrogenase, mitochondrial of Rattus norvegicus (Rat).